The sequence spans 322 residues: Phosphate acetyltransferase (322 aa).

It belongs to the phosphate acetyltransferase and butyryltransferase family.

The protein resides in the cytoplasm. The enzyme catalyses acetyl-CoA + phosphate = acetyl phosphate + CoA. It participates in metabolic intermediate biosynthesis; acetyl-CoA biosynthesis; acetyl-CoA from acetate: step 2/2. In Mycoplasma capricolum subsp. capricolum (strain California kid / ATCC 27343 / NCTC 10154), this protein is Phosphate acetyltransferase (pta).